A 228-amino-acid chain; its full sequence is Ribosomal RNA large subunit methyltransferase E (228 aa).

S-adenosyl-L-methionine is bound by residues Gly76, Trp78, Asp99, Asp115, and Asp139. Lys179 functions as the Proton acceptor in the catalytic mechanism.

This sequence belongs to the class I-like SAM-binding methyltransferase superfamily. RNA methyltransferase RlmE family.

Its subcellular location is the cytoplasm. It carries out the reaction uridine(2552) in 23S rRNA + S-adenosyl-L-methionine = 2'-O-methyluridine(2552) in 23S rRNA + S-adenosyl-L-homocysteine + H(+). Its function is as follows. Specifically methylates the uridine in position 2552 of 23S rRNA at the 2'-O position of the ribose in the fully assembled 50S ribosomal subunit. The polypeptide is Ribosomal RNA large subunit methyltransferase E (Nitrobacter hamburgensis (strain DSM 10229 / NCIMB 13809 / X14)).